A 403-amino-acid chain; its full sequence is Aminomethyltransferase, mitochondrial (403 aa).

Residues 1 to 28 constitute a mitochondrion transit peptide; the sequence is MHRIVSVVAPLGFRLQAQPLVQSRPLSS. Residues Glu232 and Arg261 each coordinate substrate. An N6-succinyllysine modification is found at Lys368. Tyr399 contacts substrate.

The protein belongs to the GcvT family. In terms of assembly, the glycine cleavage system is composed of four proteins: P, T, L and H.

Its subcellular location is the mitochondrion. It catalyses the reaction N(6)-[(R)-S(8)-aminomethyldihydrolipoyl]-L-lysyl-[protein] + (6S)-5,6,7,8-tetrahydrofolate = N(6)-[(R)-dihydrolipoyl]-L-lysyl-[protein] + (6R)-5,10-methylene-5,6,7,8-tetrahydrofolate + NH4(+). The glycine cleavage system catalyzes the degradation of glycine. This chain is Aminomethyltransferase, mitochondrial, found in Mus musculus (Mouse).